The following is a 633-amino-acid chain: Threonine--tRNA ligase (633 aa).

One can recognise a TGS domain in the interval 1-59; sequence MIKVTFLAEQKVKEYSGRVTGFDILQPDALREAIAFKVNGELYDLSREIESDTEIEVIQ. The interval 240–532 is catalytic; the sequence is DHRKIAKDMD…LIENYAGKFP (293 aa). The Zn(2+) site is built by cysteine 332, histidine 383, and histidine 509.

It belongs to the class-II aminoacyl-tRNA synthetase family. In terms of assembly, homodimer. Zn(2+) is required as a cofactor.

The protein resides in the cytoplasm. It carries out the reaction tRNA(Thr) + L-threonine + ATP = L-threonyl-tRNA(Thr) + AMP + diphosphate + H(+). Functionally, catalyzes the attachment of threonine to tRNA(Thr) in a two-step reaction: L-threonine is first activated by ATP to form Thr-AMP and then transferred to the acceptor end of tRNA(Thr). Also edits incorrectly charged L-seryl-tRNA(Thr). The chain is Threonine--tRNA ligase from Wolbachia pipientis subsp. Culex pipiens (strain wPip).